Consider the following 80-residue polypeptide: Progonadoliberin-1 (80 aa).

An N-terminal signal peptide occupies residues 1-21; it reads MGIKRALWWMVVCVVVLQVSA. The residue at position 22 (Gln22) is a Pyrrolidone carboxylic acid. Gly31 is subject to Glycine amide.

This sequence belongs to the GnRH family.

It localises to the secreted. Its function is as follows. Stimulates the secretion of gonadotropins. The chain is Progonadoliberin-1 (gnrh1) from Clarias gariepinus (North African catfish).